The following is a 319-amino-acid chain: MNTNKIGVLLANLGTPDEPTTPAVKRYLKQFLSDPRVIDLPKFKWQFILNYMILPKRSPKVAKLYREIWTEQGSPLLAISRQQQQALQDYFNRQNQNVLVELGMSYGNPSIESATDRLIKAGVSKIIVLPLYPQYSSTTTASVLDAFARGLTQQRNIVPFEFIHSYHNDPLYIQALANTIRLADDEKLLFSFHGIPKRYQTEGDFYPEHCQKTAQLVADKLSLSNEQWLVTYQSRFGDEEWLQPYTDETLEKLPSQGVKKIAVICAGFSADCLETLEEIAEENKENFLNAGGQSYRYIPALNANTDHINALAKLIEAKI.

The Fe cation site is built by histidine 193 and glutamate 274.

It belongs to the ferrochelatase family.

It localises to the cytoplasm. It catalyses the reaction heme b + 2 H(+) = protoporphyrin IX + Fe(2+). Its pathway is porphyrin-containing compound metabolism; protoheme biosynthesis; protoheme from protoporphyrin-IX: step 1/1. Its function is as follows. Catalyzes the ferrous insertion into protoporphyrin IX. The chain is Ferrochelatase from Actinobacillus pleuropneumoniae serotype 5b (strain L20).